A 335-amino-acid chain; its full sequence is Leukocyte cell-derived chemotaxin 1 (335 aa).

Residues 45–65 (VVLISGAVLLLLGAIGAFYFW) traverse the membrane as a helical segment. The 98-residue stretch at 104-201 (GSGAEEAVEV…LCGDLPIFWL (98 aa)) folds into the BRICHOS domain. A disulfide bridge connects residues C131 and C193. The propeptide occupies 211–214 (RERR). The interval 221 to 269 (VTTTTTRRLRSGPQGTPAPGRPNNGTRPSVQEDAEPFNPDNPYHQQEGE) is disordered. T223 carries an N-linked (GlcNAc...) asparagine; in variant 223-N-E-224 glycan. An O-linked (GalNAc...) threonine; partial glycan is attached at T236. N-linked (GlcNAc...) asparagine glycosylation occurs at N244. 4 disulfide bridges follow: C283-C287, C284-C324, C294-C318, and C298-C314.

Belongs to the chondromodulin-1 family. After cleavage, the post-translationally modified ChM-I is secreted as a glycoprotein. In terms of processing, two other smaller nonglycosylated chondromodulin forms (9 kDa and 7 kDa) are found either in developing articular cartilage or in chondrocytes. The 9 kDa form could be processed by an extracellular matrix-associated protease as a metalloproteinase and the 7 kDa form could be processed intracellularly. Nasal and articular cartilage, and fetal epiphysis.

It is found in the secreted. It localises to the extracellular space. Its subcellular location is the extracellular matrix. The protein resides in the endomembrane system. Functionally, bifunctional growth regulator that stimulates the growth of cultured chondrocytes in the presence of basic fibroblast growth factor (FGF) but inhibits the growth of cultured vascular endothelial cells. May contribute to the rapid growth of cartilage and vascular invasion prior to the replacement of cartilage by bone during endochondral bone development. Inhibits in vitro tube formation and mobilization of endothelial cells. Plays a role as antiangiogenic factor in cardiac valves to suppress neovascularization. The sequence is that of Leukocyte cell-derived chemotaxin 1 from Bos taurus (Bovine).